Reading from the N-terminus, the 143-residue chain is Protein SLC31A2 (143 aa).

Residues 1 to 22 lie on the Extracellular side of the membrane; sequence MPMHFIFSDEAVLLFDFWRVHS. A helical transmembrane segment spans residues 23 to 43; the sequence is PTGMALSVLVVLLLAVLYEGI. The Cytoplasmic segment spans residues 44–93; the sequence is KVGKAKLLHKTLESLPATNSQQFILGPDQDSTGSRSTSDNRTRLRWFLCY. At Thr-75 the chain carries Phosphothreonine. Ser-77 bears the Phosphoserine mark. Residues 94–114 form a helical membrane-spanning segment; that stretch reads FGQSLVHVIQVVIGYFVMLAV. Residues 115 to 119 lie on the Extracellular side of the membrane; that stretch reads MSYNT. A helical membrane pass occupies residues 120 to 140; the sequence is WIFLGVVLGSAVGYYLAYPLL. The Cytoplasmic segment spans residues 141–143; that stretch reads NMT.

This sequence belongs to the copper transporter (Ctr) (TC 1.A.56) family. SLC31A subfamily. As to quaternary structure, oligomer. Interacts with SLC31A1; this interaction stabilizes SLC31A2 and protects it from ubiquitination and the subsequent degradation. In terms of processing, ubiquitinated; ubiquitination and the subsequent proteasomal degradation are prevent by SLC31A1 that stabilizes it.

The protein localises to the membrane. It localises to the cytoplasmic vesicle membrane. The protein resides in the late endosome membrane. Its subcellular location is the lysosome membrane. It is found in the recycling endosome membrane. In terms of biological role, does not function as a copper(1+) importer in vivo. However, in vitro functions as a low-affinity copper(1+) importer. Regulator of SLC31A1 which facilitates the cleavage of the SLC31A1 ecto-domain or which stabilizes the truncated form of SLC31A1 (Truncated CTR1 form), thereby drives the SLC31A1 truncated form-dependent endosomal copper export and modulates the copper and cisplatin accumulation via SLC31A1. In Mus musculus (Mouse), this protein is Protein SLC31A2.